Reading from the N-terminus, the 138-residue chain is Outer membrane protein assembly factor BamE (138 aa).

A signal peptide spans 1–42 (MSHLTMIKTLNLRPFHSASALRKIVITSILGVAVTMSGCSLL).

Belongs to the BamE family. Part of the Bam complex.

It localises to the cell outer membrane. Part of the outer membrane protein assembly complex, which is involved in assembly and insertion of beta-barrel proteins into the outer membrane. In Psychrobacter arcticus (strain DSM 17307 / VKM B-2377 / 273-4), this protein is Outer membrane protein assembly factor BamE.